The primary structure comprises 303 residues: Mycothiol acetyltransferase (303 aa).

N-acetyltransferase domains follow at residues 6–134 and 154–303; these read TSLA…VEGD and NEAY…QSSS. E37 lines the 1D-myo-inositol 2-(L-cysteinylamino)-2-deoxy-alpha-D-glucopyranoside pocket. Acetyl-CoA-binding positions include 75–77 and 83–88; these read VVV and RQGYGS. 1D-myo-inositol 2-(L-cysteinylamino)-2-deoxy-alpha-D-glucopyranoside is bound by residues E180, K221, and E233. Acetyl-CoA is bound by residues 237–239 and 244–250; these read VGL and RRRGLGD. Residue Y271 participates in 1D-myo-inositol 2-(L-cysteinylamino)-2-deoxy-alpha-D-glucopyranoside binding. 276–281 serves as a coordination point for acetyl-CoA; it reads NESARR.

Belongs to the acetyltransferase family. MshD subfamily. Monomer.

The enzyme catalyses 1D-myo-inositol 2-(L-cysteinylamino)-2-deoxy-alpha-D-glucopyranoside + acetyl-CoA = mycothiol + CoA + H(+). Functionally, catalyzes the transfer of acetyl from acetyl-CoA to desacetylmycothiol (Cys-GlcN-Ins) to form mycothiol. The sequence is that of Mycothiol acetyltransferase from Corynebacterium diphtheriae (strain ATCC 700971 / NCTC 13129 / Biotype gravis).